A 342-amino-acid chain; its full sequence is Ankyrin repeat domain-containing protein 2A (342 aa).

Positions 1–41 (MASNSEKNPLLSDEKPKSTEENKSSKPESASGSSTSSAMPG) are disordered. The span at 12–26 (SDEKPKSTEENKSSK) shows a compositional bias: basic and acidic residues. Residues 27–37 (PESASGSSTSS) show a composition bias toward low complexity. 4 ANK repeats span residues 217 to 246 (EEES…NKDE), 250 to 279 (EGRT…SVNA), 283 to 312 (NKNT…AVTL), and 316 to 342 (DEKT…DAFL). A 1,2-diacyl-3-O-(beta-D-galactosyl)-sn-glycerol-binding residues include His223 and Glu246. Residues Tyr294 and Arg296 each coordinate a 1,2-diacyl-sn-glycero-3-phospho-(1'-sn-glycerol).

As to quaternary structure, interacts with TOM20-4, CYTB5-E, CBR1, APX3, APX5, TOC34 and GRF6. Binds to chloroplast outer envelope membrane (OEM) protein targeting signals, as well as to chloroplasts. Interacts with OEP7. Binds to HSP17.8 via its ankyrin repeats, this interaction enhances chaperone activity and chloroplast binding. Also interacts with HSP17.4A, HSP17.6A and HSP18.1. Binds specifically to two chloroplast glycolipids, monogalactosyldiacylglycerol (MGDG) and phosphatidylglycerol (PG). In terms of tissue distribution, ubiquitously expressed at basal level.

The protein localises to the cytoplasm. The protein resides in the nucleus. It localises to the plastid. It is found in the chloroplast outer membrane. In terms of biological role, exhibits chaperone activity toward chloroplast outer envelope membrane, mitochondrion outer membrane, endoplasmic reticulum membrane and peroxisomal proteins, by recruiting specific proteins containing a single transmembrane associated with an AKR2A-binding sequence (ABS) and subsequently binding glycolipids (e.g. monogalactosyldiacylglycerol (MGDG) and phosphatidylglycerol (PG)) present in the membrane of the target organelle. Seems to be involved in the regulation of hydrogen peroxide levels during biotic and abiotic stresses by optimizing the ascorbate peroxidase 3 (APX3) hydrogen peroxide-degrading activity. This regulation might be monitored by GRF6. Cytosolic targeting factor for chloroplast outer membrane (COM) proteins that mediates sorting and targeting of nascent chloroplast outer envelope membrane (OEM) proteins to the chloroplast. Facilitates the targeting of OEP7 to chloroplasts. Facilitates the targeting of APX3 to peroxisomes. Involved in cellular metabolism (e.g. peroxisome activity) and required for plant growth and development. The sequence is that of Ankyrin repeat domain-containing protein 2A from Arabidopsis thaliana (Mouse-ear cress).